Here is a 103-residue protein sequence, read N- to C-terminus: UPF0058 protein MJ1205 (103 aa).

This sequence belongs to the UPF0058 family.

This is UPF0058 protein MJ1205 from Methanocaldococcus jannaschii (strain ATCC 43067 / DSM 2661 / JAL-1 / JCM 10045 / NBRC 100440) (Methanococcus jannaschii).